Consider the following 142-residue polypeptide: Universal stress protein D (142 aa).

It belongs to the universal stress protein A family.

It localises to the cytoplasm. Its function is as follows. Required for resistance to DNA-damaging agents. The polypeptide is Universal stress protein D (uspD) (Escherichia coli (strain K12)).